The sequence spans 242 residues: Small ribosomal subunit protein uS2 (242 aa).

This sequence belongs to the universal ribosomal protein uS2 family.

This is Small ribosomal subunit protein uS2 from Shewanella amazonensis (strain ATCC BAA-1098 / SB2B).